We begin with the raw amino-acid sequence, 175 residues long: Granulocyte colony-stimulating factor (175 aa).

2 disulfides stabilise this stretch: Cys-37/Cys-43 and Cys-65/Cys-75. O-linked (GalNAc...) threonine glycosylation is present at Thr-134.

This sequence belongs to the IL-6 superfamily. As to quaternary structure, monomer. Post-translationally, O-glycosylated.

It localises to the secreted. Its function is as follows. Granulocyte/macrophage colony-stimulating factors are cytokines that act in hematopoiesis by controlling the production, differentiation, and function of 2 related white cell populations of the blood, the granulocytes and the monocytes-macrophages. This CSF induces granulocytes. This is Granulocyte colony-stimulating factor (CSF3) from Canis lupus familiaris (Dog).